Reading from the N-terminus, the 153-residue chain is SsrA-binding protein (153 aa).

The segment at 129–153 (KREDMKKKDQSREMAQALRERSKSH) is disordered.

It belongs to the SmpB family.

It is found in the cytoplasm. Functionally, required for rescue of stalled ribosomes mediated by trans-translation. Binds to transfer-messenger RNA (tmRNA), required for stable association of tmRNA with ribosomes. tmRNA and SmpB together mimic tRNA shape, replacing the anticodon stem-loop with SmpB. tmRNA is encoded by the ssrA gene; the 2 termini fold to resemble tRNA(Ala) and it encodes a 'tag peptide', a short internal open reading frame. During trans-translation Ala-aminoacylated tmRNA acts like a tRNA, entering the A-site of stalled ribosomes, displacing the stalled mRNA. The ribosome then switches to translate the ORF on the tmRNA; the nascent peptide is terminated with the 'tag peptide' encoded by the tmRNA and targeted for degradation. The ribosome is freed to recommence translation, which seems to be the essential function of trans-translation. The polypeptide is SsrA-binding protein (Geobacter metallireducens (strain ATCC 53774 / DSM 7210 / GS-15)).